Reading from the N-terminus, the 323-residue chain is Cell division protein ZipA (323 aa).

Topologically, residues 1–4 (MDLN) are periplasmic. A helical membrane pass occupies residues 5 to 25 (TILIILGIIALIILVVHGLWA). Residues 26–323 (NRREKSQYFK…AEKAYLDKVR (298 aa)) lie on the Cytoplasmic side of the membrane. Residues 44-73 (SRLREPPAHIQSASEEKKDANTSTPTAEVS) are disordered.

This sequence belongs to the ZipA family. As to quaternary structure, interacts with FtsZ via their C-terminal domains.

Its subcellular location is the cell inner membrane. Essential cell division protein that stabilizes the FtsZ protofilaments by cross-linking them and that serves as a cytoplasmic membrane anchor for the Z ring. Also required for the recruitment to the septal ring of downstream cell division proteins. The polypeptide is Cell division protein ZipA (Pasteurella multocida (strain Pm70)).